A 104-amino-acid chain; its full sequence is MSYVIAAPEALVAAATDLATLGSTIGAANAAAAGSTTALLTAGADEVSAAIAAYSECTARPIRHSVRGRRRSMSGSCRPWPQVGAPMRPPRPPASRRCRARSIC.

Residues 1–60 (MSYVIAAPEALVAAATDLATLGSTIGAANAAAAGSTTALLTAGADEVSAAIAAYSECTAR) enclose the PE domain. The tract at residues 64–104 (HSVRGRRRSMSGSCRPWPQVGAPMRPPRPPASRRCRARSIC) is disordered. Residues 94 to 104 (ASRRCRARSIC) show a composition bias toward basic residues.

The protein belongs to the mycobacterial PE family. PGRS subfamily.

Binds fibronectin. May contribute to pathogenicity. The chain is PE-PGRS family protein PE_PGRS60 from Mycobacterium tuberculosis (strain ATCC 25618 / H37Rv).